The following is a 95-amino-acid chain: Small ribosomal subunit protein uS19 (95 aa).

This sequence belongs to the universal ribosomal protein uS19 family.

In terms of biological role, protein S19 forms a complex with S13 that binds strongly to the 16S ribosomal RNA. This is Small ribosomal subunit protein uS19 from Bdellovibrio bacteriovorus (strain ATCC 15356 / DSM 50701 / NCIMB 9529 / HD100).